The primary structure comprises 93 residues: Beta-defensin 128 (93 aa).

The N-terminal stretch at 1–18 (MKLFLVLIILLFEVLTDG) is a signal peptide. Intrachain disulfides connect Cys24/Cys52, Cys32/Cys46, and Cys36/Cys53.

Belongs to the beta-defensin family.

It localises to the secreted. Functionally, has antibacterial activity. The sequence is that of Beta-defensin 128 (DEFB128) from Pongo pygmaeus (Bornean orangutan).